A 267-amino-acid polypeptide reads, in one-letter code: DCN1-like protein 2 (267 aa).

The disordered stretch occupies residues 1–48 (MTRKYTKKSSGSTASTTNSTAEIVDLTTSTSSVGKKRKSPDEKAQPIT). Residues 8–21 (KSSGSTASTTNSTA) show a composition bias toward low complexity. The 188-residue stretch at 75 to 262 (HYTYLYTYIF…LLDQFSEWVQ (188 aa)) folds into the DCUN1 domain.

The sequence is that of DCN1-like protein 2 from Dictyostelium discoideum (Social amoeba).